Consider the following 381-residue polypeptide: Phthiodiolone/phenolphthiodiolone dimycocerosates ketoreductase (381 aa).

Belongs to the mer family. Phthiodiolone/phenolphthiodiolone dimycocerosates ketoreductase subfamily.

In terms of biological role, catalyzes the reduction of the keto moiety of phthiodiolone dimycocerosates (DIM B) and glycosylated phenolphthiodiolone dimycocerosates to form the intermediate compounds phthiotriol and glycosylated phenolphthiotriol dimycocerosates during phthiocerol dimycocerosates (DIM A) and glycosylated phenolphthiocerol dimycocerosates (PGL) biosynthesis. The protein is Phthiodiolone/phenolphthiodiolone dimycocerosates ketoreductase of Mycobacterium tuberculosis (strain CDC 1551 / Oshkosh).